A 365-amino-acid polypeptide reads, in one-letter code: MIILGIETSCDETAAAVVRDGRFVLSNIIRSQVDLHQRYGGVVPELASRRHVTSIVPVLDLALEQAGIGPSAIDAIAVTEGPGLAGSLLVGINVAKTLAFVWEKPLIPVNHLEGHIYANWLTLPGQDEVPEPTFPLVCLIVSGGHTELVLMRGHGDYVLLGRTLDDAAGEAFDKAARLLGLGFPGGPAIQKAAEQGRPGRFSLPRAWLGESYDFSFSGLKTALLRVLEQYQRRPARRVAAGQPFPEYVAPEYGPSVPIADLAAEFQAAVVEVLAEKTARAAREFGATMVLLAGGVAANAALRQRLREISPVPVRYPPPILCTDNAAMIAGAAYYLAQRGVRADLDLDVHAHLPLVTRTLLRAGEA.

The Fe cation site is built by histidine 111 and histidine 115. Substrate contacts are provided by residues 140-144 (IVSGG), aspartate 173, glycine 186, and asparagine 298. Aspartate 323 is a binding site for Fe cation.

Belongs to the KAE1 / TsaD family. The cofactor is Fe(2+).

Its subcellular location is the cytoplasm. The enzyme catalyses L-threonylcarbamoyladenylate + adenosine(37) in tRNA = N(6)-L-threonylcarbamoyladenosine(37) in tRNA + AMP + H(+). Functionally, required for the formation of a threonylcarbamoyl group on adenosine at position 37 (t(6)A37) in tRNAs that read codons beginning with adenine. Is involved in the transfer of the threonylcarbamoyl moiety of threonylcarbamoyl-AMP (TC-AMP) to the N6 group of A37, together with TsaE and TsaB. TsaD likely plays a direct catalytic role in this reaction. In Thermomicrobium roseum (strain ATCC 27502 / DSM 5159 / P-2), this protein is tRNA N6-adenosine threonylcarbamoyltransferase.